We begin with the raw amino-acid sequence, 350 residues long: tRNA uridine(34) hydroxylase (350 aa).

In terms of domain architecture, Rhodanese spans 146–240; it reads DDPDALFIDM…YARKAREQGL (95 aa). The active-site Cysteine persulfide intermediate is the C200.

It belongs to the TrhO family.

It carries out the reaction uridine(34) in tRNA + AH2 + O2 = 5-hydroxyuridine(34) in tRNA + A + H2O. In terms of biological role, catalyzes oxygen-dependent 5-hydroxyuridine (ho5U) modification at position 34 in tRNAs, the first step in 5-carboxymethoxyuridine (cmo5U) biosynthesis. May be part of an alternate pathway, which is able to bypass cmo5U biogenesis in a subset of tRNAs under aerobic conditions. The sequence is that of tRNA uridine(34) hydroxylase from Escherichia coli O17:K52:H18 (strain UMN026 / ExPEC).